Reading from the N-terminus, the 76-residue chain is Sulfur carrier protein TusA (76 aa).

The active-site Cysteine persulfide intermediate is Cys14.

This sequence belongs to the sulfur carrier protein TusA family. Interacts with IscS.

It is found in the cytoplasm. It participates in tRNA modification. Its function is as follows. Sulfur carrier protein involved in sulfur trafficking in the cell. Part of a sulfur-relay system required for 2-thiolation during synthesis of 2-thiouridine of the modified wobble base 5-methylaminomethyl-2-thiouridine (mnm(5)s(2)U) in tRNA. Interacts with IscS and stimulates its cysteine desulfurase activity. Accepts an activated sulfur from IscS, which is then transferred to TusD, and thus determines the direction of sulfur flow from IscS to 2-thiouridine formation. Also appears to be involved in sulfur transfer for the biosynthesis of molybdopterin. The chain is Sulfur carrier protein TusA from Buchnera aphidicola subsp. Acyrthosiphon pisum (strain 5A).